The sequence spans 917 residues: Hexokinase-2 (917 aa).

Met-1 bears the N-acetylmethionine mark. Residues 1–16 (MIASHMIACLFTELNQ) form a mitochondrial-binding peptide (MBP) region. Hexokinase domains follow at residues 16 to 458 (QNQV…MVTA) and 464 to 906 (ADQH…LITA). Residues Arg-30 and 84–89 (DLGGTN) contribute to the ATP site. Residues 73 to 207 (DGTEHGEFLA…DFDIDIVAVV (135 aa)) are hexokinase small subdomain 1. 84–88 (DLGGT) contributes to the D-glucose 6-phosphate binding site. D-glucose is bound by residues 155–156 (SF), 172–173 (TK), and 208–209 (ND). Positions 208–447 (NDTVGTMMTC…CDVRFLRSED (240 aa)) are hexokinase large subdomain 1. Positions 209 and 232 each coordinate D-glucose 6-phosphate. D-glucose is bound by residues Asn-235, Glu-260, and 291 to 294 (QLFE). 413–415 (DGS) lines the D-glucose 6-phosphate pocket. 425-426 (KR) contributes to the ATP binding site. Residues Ser-449 and 532–536 (DLGGT) each bind D-glucose 6-phosphate. Positions 521 to 655 (DGTEKGDFLA…EFDLDVVAVV (135 aa)) are hexokinase small subdomain 2. Residue 532-537 (DLGGTN) participates in ATP binding. Residues 603-604 (SF), 620-621 (TK), and 656-657 (ND) contribute to the D-glucose site. The segment at 656 to 895 (NDTVGTMMTC…CDVSFLESED (240 aa)) is hexokinase large subdomain 2. Residues Asp-657 and Thr-680 each contribute to the D-glucose 6-phosphate site. Residue Thr-680 participates in ATP binding. D-glucose-binding positions include 682-683 (SN), Glu-708, and 739-742 (QRFE). ATP-binding positions include 747 to 748 (GM), 784 to 788 (TKFLS), and 863 to 867 (TLYKL). Residues 861-863 (DGT) and Ser-897 each bind D-glucose 6-phosphate.

Belongs to the hexokinase family. As to quaternary structure, monomer. Interacts with TIGAR; the interaction increases hexokinase activity in a hypoxia- and HIF1A-dependent manner.

It localises to the mitochondrion outer membrane. The protein localises to the cytoplasm. Its subcellular location is the cytosol. It catalyses the reaction a D-hexose + ATP = a D-hexose 6-phosphate + ADP + H(+). It carries out the reaction D-fructose + ATP = D-fructose 6-phosphate + ADP + H(+). The enzyme catalyses D-glucose + ATP = D-glucose 6-phosphate + ADP + H(+). It participates in carbohydrate metabolism; hexose metabolism. The protein operates within carbohydrate degradation; glycolysis; D-glyceraldehyde 3-phosphate and glycerone phosphate from D-glucose: step 1/4. With respect to regulation, hexokinase activity is specifically inhibited by 2,6-disubstituted glucosamines. Its function is as follows. Catalyzes the phosphorylation of hexose, such as D-glucose and D-fructose, to hexose 6-phosphate (D-glucose 6-phosphate and D-fructose 6-phosphate, respectively). Mediates the initial step of glycolysis by catalyzing phosphorylation of D-glucose to D-glucose 6-phosphate. Plays a key role in maintaining the integrity of the outer mitochondrial membrane by preventing the release of apoptogenic molecules from the intermembrane space and subsequent apoptosis. In Rattus norvegicus (Rat), this protein is Hexokinase-2.